A 26-amino-acid chain; its full sequence is Stage V sporulation protein M (26 aa).

The important for localization stretch occupies residues 3 to 9 (FYTIKLP).

Interacts with SpoIVA. May interact with the ATP-dependent protease FtsH.

The protein localises to the forespore outer membrane. In terms of biological role, coordinates cortex and coat assembly during sporulation. Associates with the spore coat protein SpoIVA and with the outer forespore membrane, thereby serving as a membrane anchor that tethers SpoIVA and the entire spore coat to the forespore surface. May also serve as a competitive inhibitor of FtsH activity during sporulation. The polypeptide is Stage V sporulation protein M (Bacillus subtilis (strain 168)).